The sequence spans 399 residues: MELERKSSGIIKSFNVLDIFSINLLYMGILSGISYPLFVSSLMKNVNLLFAIVIGAVFEIPLLLMYYKLTTKFPLNGGDYAYIRTAFSSKFYTIFGISLWLTYVLSQPILGDLVLLNFNIQNQFEQFLIVESLFPLVLLIIASKRIYAKIVDILAIFQIIIAIFIAFKSFNYQYQTFTISNTLLSALLFDLSAFIFINAISYIAGEIKNIKKSSMIGYFVSYGVVAILSILDSYSNLNILFALMPIWFFSYMPIANKIQSRLIQTMSFDKVLPEKFSKINPNVLLLIFSTETIANVLENLLGFNISFGLDGLLFIFWNFIIVAFAYLKLMNDKKLFSIVLTSLAIQIFLFFYLGYQNPIFYKFVIAGNIEYTILRIMILPIIGAIVYLLRKSKINVIPK.

The next 11 membrane-spanning stretches (helical) occupy residues 19–39 (IFSINLLYMGILSGISYPLFV), 46–66 (VNLLFAIVIGAVFEIPLLLMY), 91–111 (FYTIFGISLWLTYVLSQPILG), 123–143 (QFEQFLIVESLFPLVLLIIAS), 146–166 (IYAKIVDILAIFQIIIAIFIA), 183–203 (LLSALLFDLSAFIFINAISYI), 225–247 (VAILSILDSYSNLNILFALMPIW), 283–303 (VLLLIFSTETIANVLENLLGF), 307–327 (FGLDGLLFIFWNFIIVAFAYL), 335–355 (LFSIVLTSLAIQIFLFFYLGY), and 369–389 (IEYTILRIMILPIIGAIVYLL).

The protein localises to the host membrane. In terms of biological role, putative amino acid transporter. This is an uncharacterized protein from Saccharolobus islandicus (Sulfolobus islandicus).